Consider the following 560-residue polypeptide: 2-succinyl-5-enolpyruvyl-6-hydroxy-3-cyclohexene-1-carboxylate synthase (560 aa).

It belongs to the TPP enzyme family. MenD subfamily. Homodimer. The cofactor is Mg(2+). Mn(2+) is required as a cofactor. It depends on thiamine diphosphate as a cofactor.

It catalyses the reaction isochorismate + 2-oxoglutarate + H(+) = 5-enolpyruvoyl-6-hydroxy-2-succinyl-cyclohex-3-ene-1-carboxylate + CO2. Its pathway is quinol/quinone metabolism; 1,4-dihydroxy-2-naphthoate biosynthesis; 1,4-dihydroxy-2-naphthoate from chorismate: step 2/7. It participates in quinol/quinone metabolism; menaquinone biosynthesis. Its function is as follows. Catalyzes the thiamine diphosphate-dependent decarboxylation of 2-oxoglutarate and the subsequent addition of the resulting succinic semialdehyde-thiamine pyrophosphate anion to isochorismate to yield 2-succinyl-5-enolpyruvyl-6-hydroxy-3-cyclohexene-1-carboxylate (SEPHCHC). This Staphylococcus saprophyticus subsp. saprophyticus (strain ATCC 15305 / DSM 20229 / NCIMB 8711 / NCTC 7292 / S-41) protein is 2-succinyl-5-enolpyruvyl-6-hydroxy-3-cyclohexene-1-carboxylate synthase.